Reading from the N-terminus, the 139-residue chain is ATP synthase epsilon chain (139 aa).

This sequence belongs to the ATPase epsilon chain family. As to quaternary structure, F-type ATPases have 2 components, CF(1) - the catalytic core - and CF(0) - the membrane proton channel. CF(1) has five subunits: alpha(3), beta(3), gamma(1), delta(1), epsilon(1). CF(0) has three main subunits: a, b and c.

Its subcellular location is the cell inner membrane. Functionally, produces ATP from ADP in the presence of a proton gradient across the membrane. This chain is ATP synthase epsilon chain, found in Acinetobacter baylyi (strain ATCC 33305 / BD413 / ADP1).